Here is a 364-residue protein sequence, read N- to C-terminus: tRNA N6-adenosine threonylcarbamoyltransferase (364 aa).

2 residues coordinate Fe cation: His118 and His122. Residues 140-144 (LVSGG), Asp173, Gly186, and Asn288 contribute to the substrate site. Asp316 is a binding site for Fe cation.

It belongs to the KAE1 / TsaD family. Requires Fe(2+) as cofactor.

Its subcellular location is the cytoplasm. It catalyses the reaction L-threonylcarbamoyladenylate + adenosine(37) in tRNA = N(6)-L-threonylcarbamoyladenosine(37) in tRNA + AMP + H(+). Required for the formation of a threonylcarbamoyl group on adenosine at position 37 (t(6)A37) in tRNAs that read codons beginning with adenine. Is involved in the transfer of the threonylcarbamoyl moiety of threonylcarbamoyl-AMP (TC-AMP) to the N6 group of A37, together with TsaE and TsaB. TsaD likely plays a direct catalytic role in this reaction. The protein is tRNA N6-adenosine threonylcarbamoyltransferase of Cereibacter sphaeroides (strain ATCC 17023 / DSM 158 / JCM 6121 / CCUG 31486 / LMG 2827 / NBRC 12203 / NCIMB 8253 / ATH 2.4.1.) (Rhodobacter sphaeroides).